The chain runs to 448 residues: Glucose-6-phosphate isomerase (448 aa).

E288 (proton donor) is an active-site residue. Active-site residues include H309 and K423.

This sequence belongs to the GPI family.

It is found in the cytoplasm. The catalysed reaction is alpha-D-glucose 6-phosphate = beta-D-fructose 6-phosphate. It participates in carbohydrate biosynthesis; gluconeogenesis. The protein operates within carbohydrate degradation; glycolysis; D-glyceraldehyde 3-phosphate and glycerone phosphate from D-glucose: step 2/4. In terms of biological role, catalyzes the reversible isomerization of glucose-6-phosphate to fructose-6-phosphate. In Fusobacterium nucleatum subsp. nucleatum (strain ATCC 25586 / DSM 15643 / BCRC 10681 / CIP 101130 / JCM 8532 / KCTC 2640 / LMG 13131 / VPI 4355), this protein is Glucose-6-phosphate isomerase.